The following is a 194-amino-acid chain: Adenylate kinase (194 aa).

An ATP-binding site is contributed by 10–15; sequence GAGKGT. Positions 30–59 are NMP; it reads STGDMLRAAVKAETEIGKKAKAVMDAGELV. AMP is bound by residues threonine 31, arginine 36, 57–59, 85–88, and glutamine 92; these read ELV and GYPR. Residues 126-142 form an LID region; the sequence is KRAEDAQAAGQPVRRDD. Arginine 127 contacts ATP. 2 residues coordinate AMP: arginine 139 and arginine 150. Alanine 178 is an ATP binding site.

It belongs to the adenylate kinase family. Monomer.

The protein localises to the cytoplasm. It catalyses the reaction AMP + ATP = 2 ADP. It participates in purine metabolism; AMP biosynthesis via salvage pathway; AMP from ADP: step 1/1. In terms of biological role, catalyzes the reversible transfer of the terminal phosphate group between ATP and AMP. Plays an important role in cellular energy homeostasis and in adenine nucleotide metabolism. The chain is Adenylate kinase from Chelativorans sp. (strain BNC1).